The chain runs to 103 residues: Putative membrane protein insertion efficiency factor (103 aa).

This sequence belongs to the UPF0161 family.

The protein localises to the cell membrane. Could be involved in insertion of integral membrane proteins into the membrane. This chain is Putative membrane protein insertion efficiency factor, found in Clavibacter michiganensis subsp. michiganensis (strain NCPPB 382).